The chain runs to 330 residues: Succinylglutamate desuccinylase (330 aa).

The Zn(2+) site is built by histidine 53, glutamate 56, and histidine 147. Residue glutamate 210 is part of the active site.

The protein belongs to the AspA/AstE family. Succinylglutamate desuccinylase subfamily. Zn(2+) is required as a cofactor.

It carries out the reaction N-succinyl-L-glutamate + H2O = L-glutamate + succinate. The protein operates within amino-acid degradation; L-arginine degradation via AST pathway; L-glutamate and succinate from L-arginine: step 5/5. Functionally, transforms N(2)-succinylglutamate into succinate and glutamate. The polypeptide is Succinylglutamate desuccinylase (Yersinia pseudotuberculosis serotype O:1b (strain IP 31758)).